A 645-amino-acid polypeptide reads, in one-letter code: Heat shock protein SSA2 (645 aa).

At S2 the chain carries N-acetylserine. The disordered stretch occupies residues 581-645 (ANQTATQEEF…NDGPTVEEVD (65 aa)). The segment covering 611–621 (AGATPSGAAGA) has biased composition (low complexity).

It belongs to the heat shock protein 70 family. In terms of assembly, binds human histatin-5, an antifungal peptide from saliva.

It localises to the cytoplasm. The protein resides in the secreted. The protein localises to the cell wall. Heat shock protein that may play a role in the transport of polypeptides both across the mitochondrial membranes and into the endoplasmic reticulum. Functionally, acts as a highly immunodominant antigen. Plays a role in the sensitivity to, and the import of candidacidal beta-defensin peptides. HSP70/SSA1 and SSA2 bind histatin-5, a peptide from human saliva, and mediates its fungicidal activity. SSA2 facilitates fungicidal activity of Hst 5 in binding and intracellular translocation, whereas HSP70/SSA1 appears to have a lesser functional role in Hst 5 toxicity. The protein is Heat shock protein SSA2 of Candida albicans (strain SC5314 / ATCC MYA-2876) (Yeast).